The following is a 237-amino-acid chain: Ribonuclease PH (237 aa).

Phosphate contacts are provided by residues R86 and 124-126; that span reads GTR.

This sequence belongs to the RNase PH family. Homohexameric ring arranged as a trimer of dimers.

The enzyme catalyses tRNA(n+1) + phosphate = tRNA(n) + a ribonucleoside 5'-diphosphate. In terms of biological role, phosphorolytic 3'-5' exoribonuclease that plays an important role in tRNA 3'-end maturation. Removes nucleotide residues following the 3'-CCA terminus of tRNAs; can also add nucleotides to the ends of RNA molecules by using nucleoside diphosphates as substrates, but this may not be physiologically important. Probably plays a role in initiation of 16S rRNA degradation (leading to ribosome degradation) during starvation. The sequence is that of Ribonuclease PH from Bradyrhizobium sp. (strain BTAi1 / ATCC BAA-1182).